Here is a 513-residue protein sequence, read N- to C-terminus: V-type proton ATPase subunit B, kidney isoform (513 aa).

ATP is bound at residue R394. Positions 510–513 (DTAL) match the PDZ-binding motif.

Belongs to the ATPase alpha/beta chains family. V-ATPase is a heteromultimeric enzyme made up of two complexes: the ATP-hydrolytic V1 complex and the proton translocation V0 complex. The V1 complex consists of three catalytic AB heterodimers that form a heterohexamer, three peripheral stalks each consisting of EG heterodimers, one central rotor including subunits D and F, and the regulatory subunits C and H. The proton translocation complex V0 consists of the proton transport subunit a, a ring of proteolipid subunits c9c'', rotary subunit d, subunits e and f, and the accessory subunits ATP6AP1/Ac45 and ATP6AP2/PRR. Forms a complex with NHERF1 and SCL4A7. As to expression, kidney cortex and medulla.

The protein resides in the apical cell membrane. Its subcellular location is the basolateral cell membrane. Non-catalytic subunit of the V1 complex of vacuolar(H+)-ATPase (V-ATPase), a multisubunit enzyme composed of a peripheral complex (V1) that hydrolyzes ATP and a membrane integral complex (V0) that translocates protons. V-ATPase is responsible for acidifying and maintaining the pH of intracellular compartments and in some cell types, is targeted to the plasma membrane, where it is responsible for acidifying the extracellular environment. Essential for the proper assembly and activity of V-ATPase. In renal intercalated cells, mediates secretion of protons (H+) into the urine thereby ensuring correct urinary acidification. Required for optimal olfactory function by mediating the acidification of the nasal olfactory epithelium. This is V-type proton ATPase subunit B, kidney isoform (ATP6V1B1) from Bos taurus (Bovine).